Here is a 474-residue protein sequence, read N- to C-terminus: tRNA-2-methylthio-N(6)-dimethylallyladenosine synthase (474 aa).

One can recognise an MTTase N-terminal domain in the interval 3-120; that stretch reads KKLHIKTWGC…LPEMIEQVRR (118 aa). The [4Fe-4S] cluster site is built by Cys12, Cys49, Cys83, Cys157, Cys161, and Cys164. The region spanning 143–375 is the Radical SAM core domain; that stretch reads RAEGPTAFVS…QDRITQQAMR (233 aa). The TRAM domain maps to 378 to 441; the sequence is RHMMGTVQRI…TNSLRGKFIR (64 aa).

Belongs to the methylthiotransferase family. MiaB subfamily. In terms of assembly, monomer. The cofactor is [4Fe-4S] cluster.

The protein localises to the cytoplasm. It catalyses the reaction N(6)-dimethylallyladenosine(37) in tRNA + (sulfur carrier)-SH + AH2 + 2 S-adenosyl-L-methionine = 2-methylsulfanyl-N(6)-dimethylallyladenosine(37) in tRNA + (sulfur carrier)-H + 5'-deoxyadenosine + L-methionine + A + S-adenosyl-L-homocysteine + 2 H(+). Its function is as follows. Catalyzes the methylthiolation of N6-(dimethylallyl)adenosine (i(6)A), leading to the formation of 2-methylthio-N6-(dimethylallyl)adenosine (ms(2)i(6)A) at position 37 in tRNAs that read codons beginning with uridine. In Shewanella oneidensis (strain ATCC 700550 / JCM 31522 / CIP 106686 / LMG 19005 / NCIMB 14063 / MR-1), this protein is tRNA-2-methylthio-N(6)-dimethylallyladenosine synthase.